Here is a 669-residue protein sequence, read N- to C-terminus: DNA ligase (669 aa).

NAD(+)-binding positions include 32–36 (DAEYD), 81–82 (SL), and E113. K115 acts as the N6-AMP-lysine intermediate in catalysis. The NAD(+) site is built by R136, E173, K290, and K314. Positions 408, 411, 426, and 432 each coordinate Zn(2+). The region spanning 592 to 669 (AVDSALAGKI…DEQALIEFLK (78 aa)) is the BRCT domain.

Belongs to the NAD-dependent DNA ligase family. LigA subfamily. It depends on Mg(2+) as a cofactor. Mn(2+) serves as cofactor.

The catalysed reaction is NAD(+) + (deoxyribonucleotide)n-3'-hydroxyl + 5'-phospho-(deoxyribonucleotide)m = (deoxyribonucleotide)n+m + AMP + beta-nicotinamide D-nucleotide.. DNA ligase that catalyzes the formation of phosphodiester linkages between 5'-phosphoryl and 3'-hydroxyl groups in double-stranded DNA using NAD as a coenzyme and as the energy source for the reaction. It is essential for DNA replication and repair of damaged DNA. In Vibrio cholerae serotype O1 (strain ATCC 39315 / El Tor Inaba N16961), this protein is DNA ligase.